We begin with the raw amino-acid sequence, 365 residues long: MPELPEVETIACGLRPALSGRRIVGVTVHNPGTLEGPLCTPAAFTEAVQGQRIADVGRRGKLLLVAFASLPPVGHAGQPRPEGLSSSTVRDFLVTHGFHAAGCATSVHACAPLLADGQQTRGRLAGHGDGMDGTSRTGSTLPGTGGTENSDAVAVADDDTVLGLAFHLKMTGRLFIHPPATPAGIHTRVVFDLEGGTRLFFDDARKFGYVRCITRRSLALWPFWRDLGPEPLETEARGFAARLARRRGRIKALLLDQKVVAGVGNIYADESLFRAGIRPDTQAHTLTPERLFALHGHLQDVLRESIAECGSSIRDYRDAHGDAGAFQNSFRVYGRGGQPCRHCGTTLATAQVAGRTTVFCPQCQR.

P2 (schiff-base intermediate with DNA) is an active-site residue. The Proton donor role is filled by E3. K61 acts as the Proton donor; for beta-elimination activity in catalysis. The segment at R121–S150 is disordered. The span at T134 to S150 shows a compositional bias: polar residues. Residues H186, R205, and R246 each coordinate DNA. The segment at R331–R365 adopts an FPG-type zinc-finger fold. R355 acts as the Proton donor; for delta-elimination activity in catalysis.

Belongs to the FPG family. In terms of assembly, monomer. Zn(2+) is required as a cofactor.

It carries out the reaction Hydrolysis of DNA containing ring-opened 7-methylguanine residues, releasing 2,6-diamino-4-hydroxy-5-(N-methyl)formamidopyrimidine.. The enzyme catalyses 2'-deoxyribonucleotide-(2'-deoxyribose 5'-phosphate)-2'-deoxyribonucleotide-DNA = a 3'-end 2'-deoxyribonucleotide-(2,3-dehydro-2,3-deoxyribose 5'-phosphate)-DNA + a 5'-end 5'-phospho-2'-deoxyribonucleoside-DNA + H(+). Functionally, involved in base excision repair of DNA damaged by oxidation or by mutagenic agents. Acts as a DNA glycosylase that recognizes and removes damaged bases. Has a preference for oxidized purines, such as 7,8-dihydro-8-oxoguanine (8-oxoG). Has AP (apurinic/apyrimidinic) lyase activity and introduces nicks in the DNA strand. Cleaves the DNA backbone by beta-delta elimination to generate a single-strand break at the site of the removed base with both 3'- and 5'-phosphates. This Nitratidesulfovibrio vulgaris (strain ATCC 29579 / DSM 644 / CCUG 34227 / NCIMB 8303 / VKM B-1760 / Hildenborough) (Desulfovibrio vulgaris) protein is Formamidopyrimidine-DNA glycosylase.